Reading from the N-terminus, the 377-residue chain is Guanine nucleotide-binding protein subunit beta (377 aa).

WD repeat units follow at residues 63-93 (GHTG…IVWN), 105-135 (LPCA…SIFS), 154-185 (GHRG…ILWD), 202-233 (GHTA…RLWD), 246-276 (GHEG…RLYD), 292-323 (GENG…YVWD), and 339-369 (SHRN…KIWA). 2 short sequence motifs (DWD box) span residues 220 to 235 (FISG…WDTR) and 263 to 278 (FGTG…YDIR).

This sequence belongs to the WD repeat G protein beta family. As to quaternary structure, g proteins are composed of 3 units, alpha, beta and gamma. Interacts with the gamma subunits GG1 and GG2. The dimers GB1-GG1 and GB1-GG2 interact with NDL1, NDL2 and NDL3. Interacts with WNK8. Interacts with XLG2. Interacts with RACK1A, RACK1B and RACK1C. Interacts with ZAR1 (via GBeta-binding domain). Expressed in seedlings (especially at the hypocotyl/root junction), roots, leaves (restricted to veins and guard cells), and flowers. Also present in hydathods. Expressed in guard cells, mesophyll tissue of cotyledons, trichomes and whole siliques, but not in seeds.

It is found in the cell membrane. Its subcellular location is the cytoplasm. The protein localises to the nucleus. Its function is as follows. Guanine nucleotide-binding proteins (G proteins) are involved as a modulator or transducer in various transmembrane signaling systems. The beta and gamma chains are required for the GTPase activity, for replacement of GDP by GTP, and for G protein-effector interaction. The heterotrimeric G-protein controls defense responses to necrotrophic and vascular fungi probably by modulating cell wall-related genes expression (e.g. lower xylose content in cell walls); involved in resistance to fungal pathogens such as Alternaria brassicicola and Fusarium oxysporum. Modulates root architecture (e.g. lateral root formation). Acts with XGL3 in the positive regulation of root waving and root skewing. Involved in the asymmetric division of zygote and specification of apical and basal cell lineages. This Arabidopsis thaliana (Mouse-ear cress) protein is Guanine nucleotide-binding protein subunit beta (GB1).